Here is a 269-residue protein sequence, read N- to C-terminus: Energy-coupling factor transporter ATP-binding protein EcfA1 (269 aa).

Residues 8 to 242 form the ABC transporter domain; it reads IEFKDVSFQY…EEALISVGLD (235 aa). ATP is bound at residue 42–49; the sequence is GHNGSGKS.

It belongs to the ABC transporter superfamily. Energy-coupling factor EcfA family. Forms a stable energy-coupling factor (ECF) transporter complex composed of 2 membrane-embedded substrate-binding proteins (S component), 2 ATP-binding proteins (A component) and 2 transmembrane proteins (T component).

The protein localises to the cell membrane. Its function is as follows. ATP-binding (A) component of a common energy-coupling factor (ECF) ABC-transporter complex. Unlike classic ABC transporters this ECF transporter provides the energy necessary to transport a number of different substrates. This Staphylococcus epidermidis (strain ATCC 35984 / DSM 28319 / BCRC 17069 / CCUG 31568 / BM 3577 / RP62A) protein is Energy-coupling factor transporter ATP-binding protein EcfA1.